A 1940-amino-acid chain; its full sequence is Myosin-2 (1940 aa).

A Myosin N-terminal SH3-like domain is found at 33–82 (DAKTSVFVAEPKESFVKGTIQSREGGKVTVKTEGGATLTVKEDQVFPMNP). T64 and T69 each carry phosphothreonine. A Myosin motor domain is found at 86–783 (DKIEDMAMMT…LLGLLEEMRD (698 aa)). The residue at position 130 (K130) is an N6,N6,N6-trimethyllysine. ATP is bound at residue 179-186 (GESGAGKT). Y389 carries the post-translational modification Phosphotyrosine. S392 is modified (phosphoserine). T419 carries the phosphothreonine modification. Phosphoserine is present on S625. An actin-binding region spans residues 660–682 (LNKLMTNLRSTHPHFVRCIIPNE). The residue at position 758 (H758) is a Pros-methylhistidine. The actin-binding stretch occupies residues 762–776 (KFGHTKVFFKAGLLG). An IQ domain is found at 786–815 (LAQLMTRTQARCRGFLARVEYQKMVERRES). Residues 844–1940 (LLKSAETEKE…EVHTKIISEE (1097 aa)) adopt a coiled-coil conformation. S1093, S1097, S1163, and S1238 each carry phosphoserine. T1242 is subject to Phosphothreonine. Position 1244 is a phosphoserine (S1244). A phosphothreonine mark is found at T1256 and T1287. Phosphoserine occurs at positions 1289, 1293, 1304, and 1307. Phosphotyrosine is present on Y1465. T1468 is modified (phosphothreonine). At Y1493 the chain carries Phosphotyrosine. Phosphoserine is present on S1496. A Phosphothreonine modification is found at T1502. S1515 is modified (phosphoserine). Phosphothreonine is present on T1518. S1543, S1555, S1575, S1601, S1715, and S1727 each carry phosphoserine. Residues T1731 and T1737 each carry the phosphothreonine modification. Residues 1886–1905 (QAEEAEEQSNTNLSKFRKLQ) form a disordered region.

Belongs to the TRAFAC class myosin-kinesin ATPase superfamily. Myosin family. Muscle myosin is a hexameric protein that consists of 2 heavy chain subunits (MHC), 2 alkali light chain subunits (MLC) and 2 regulatory light chain subunits (MLC-2). Interacts with GCSAM.

It is found in the cytoplasm. Its subcellular location is the myofibril. Myosins are actin-based motor molecules with ATPase activity essential for muscle contraction. In Bos taurus (Bovine), this protein is Myosin-2 (MYH2).